Here is a 194-residue protein sequence, read N- to C-terminus: Protein PHLOEM PROTEIN 2-LIKE A2 (194 aa).

A helical transmembrane segment spans residues 49–71 (VTFVFFCFFKISLNSAYLYTLYS).

Vascular tissues, specifically in phloem companion cell-sieve element complexes.

The protein resides in the membrane. The sequence is that of Protein PHLOEM PROTEIN 2-LIKE A2 (PP2A2) from Arabidopsis thaliana (Mouse-ear cress).